The chain runs to 319 residues: N-acyl-aromatic-L-amino acid amidohydrolase (carboxylate-forming) (319 aa).

Residues 1–210 form a hydrolytic domain region; it reads MCSLPVPREP…TVLDFIELFN (210 aa). The Zn(2+) site is built by H21 and E24. Residues R63 and 70–71 contribute to the substrate site; that span reads NR. H116 is a Zn(2+) binding site. Positions 178 and 288 each coordinate substrate. The segment at 211–318 is shielding domain; it reads QGTAFPAFEM…PALTPAPSPA (108 aa).

The protein belongs to the AspA/AstE family. Aspartoacylase subfamily. Exists as a mixture of homodimers and homotetramer, both catalytically active. In terms of assembly, (Microbial infection) Interacts with hepatitis C virus/HCV core protein. The cofactor is Zn(2+).

The protein localises to the apical cell membrane. Its subcellular location is the cytoplasm. It carries out the reaction an N-acyl-aromatic L-alpha-amino acid + H2O = an aromatic L-alpha-amino acid + a carboxylate. The enzyme catalyses an N-acetyl-L-cysteine-S-conjugate + H2O = an S-substituted L-cysteine + acetate. Functionally, plays an important role in deacetylating mercapturic acids in kidney proximal tubules. Also acts on N-acetyl-aromatic amino acids. This chain is N-acyl-aromatic-L-amino acid amidohydrolase (carboxylate-forming) (ACY3), found in Homo sapiens (Human).